The sequence spans 497 residues: Probable pectinesterase 30 (497 aa).

An N-terminal signal peptide occupies residues 1–21; the sequence is MLVKVFSFFILMIIMVIGVSK. N-linked (GlcNAc...) asparagine glycosylation is found at asparagine 238 and asparagine 254. A substrate-binding site is contributed by threonine 263. Catalysis depends on aspartate 316, which acts as the Proton donor. Cysteine 330 and cysteine 350 are joined by a disulfide. Catalysis depends on aspartate 337, which acts as the Nucleophile. N-linked (GlcNAc...) asparagine glycosylation is present at asparagine 385. Arginine 403 and tryptophan 405 together coordinate substrate.

The protein belongs to the pectinesterase family. As to expression, expressed in siliques.

The protein resides in the secreted. The protein localises to the cell wall. The enzyme catalyses [(1-&gt;4)-alpha-D-galacturonosyl methyl ester](n) + n H2O = [(1-&gt;4)-alpha-D-galacturonosyl](n) + n methanol + n H(+). It participates in glycan metabolism; pectin degradation; 2-dehydro-3-deoxy-D-gluconate from pectin: step 1/5. Functionally, acts in the modification of cell walls via demethylesterification of cell wall pectin. In Arabidopsis thaliana (Mouse-ear cress), this protein is Probable pectinesterase 30 (PME30).